The sequence spans 268 residues: Undecaprenyl-diphosphatase (268 aa).

Helical transmembrane passes span 39-59 (SETFNIFIQLGAVLAVCLIYK), 75-95 (LPYFLKLSVAFIITSILGLWV), 106-126 (LGPVIIAIFGGAFWIYFTEKV), 179-199 (TEFAFLLGIPTMFAASLFAWI), 214-234 (LTLATGFCVSAVVAFISVKWL), and 243-263 (FIPFVWYRVGLGFFLIALVAL).

The protein belongs to the UppP family.

It is found in the cell inner membrane. It carries out the reaction di-trans,octa-cis-undecaprenyl diphosphate + H2O = di-trans,octa-cis-undecaprenyl phosphate + phosphate + H(+). Functionally, catalyzes the dephosphorylation of undecaprenyl diphosphate (UPP). Confers resistance to bacitracin. The sequence is that of Undecaprenyl-diphosphatase from Methylacidiphilum infernorum (isolate V4) (Methylokorus infernorum (strain V4)).